The chain runs to 227 residues: Translation initiation factor 6 (227 aa).

This sequence belongs to the eIF-6 family.

Binds to the 50S ribosomal subunit and prevents its association with the 30S ribosomal subunit to form the 70S initiation complex. This chain is Translation initiation factor 6, found in Pyrococcus abyssi (strain GE5 / Orsay).